The primary structure comprises 376 residues: Thymidine kinase (376 aa).

Residues 1-44 form a disordered region; the sequence is MASYPGHQHASAFDQAARSRGHSNRRTALRPRRQQEATEVRPEQ. Residues 19–32 show a composition bias toward basic residues; it reads SRGHSNRRTALRPR. A compositionally biased stretch (basic and acidic residues) spans 33–44; the sequence is RQQEATEVRPEQ. 56-63 lines the ATP pocket; sequence GPHGMGKT. Residue Glu-83 is the Proton acceptor of the active site. The substrate site is built by Tyr-101 and Gln-125. Position 216 (Arg-216) interacts with ATP. Residue Arg-222 coordinates substrate. Residues 260-280 form a disordered region; it reads GQLSGTAVPPQGAEPQSNAGP.

Belongs to the herpesviridae thymidine kinase family. Homodimer.

The catalysed reaction is thymidine + ATP = dTMP + ADP + H(+). In terms of biological role, catalyzes the transfer of the gamma-phospho group of ATP to thymidine to generate dTMP in the salvage pathway of pyrimidine synthesis. The dTMP serves as a substrate for DNA polymerase during viral DNA replication. Allows the virus to be reactivated and to grow in non-proliferative cells lacking a high concentration of phosphorylated nucleic acid precursors. In Human herpesvirus 1 (strain SC16) (HHV-1), this protein is Thymidine kinase.